Consider the following 383-residue polypeptide: BRISC and BRCA1-A complex member 2 (383 aa).

Position 1 is an N-acetylmethionine (Met1). Ser2 is modified (phosphoserine). 2 UEV-like regions span residues 30-147 (DATN…TLLE) and 275-364 (IAAF…RAKA).

Belongs to the BABAM2 family. In terms of assembly, component of the ARISC complex, at least composed of UIMC1/RAP80, ABRAXAS1, BRCC3/BRCC36, BABAM2 and BABAM1/NBA1. Component of the BRCA1-A complex, at least composed of BRCA1, BARD1, UIMC1/RAP80, ABRAXAS1, BRCC3/BRCC36, BABAM2 and BABAM1/NBA1. In the BRCA1-A complex, interacts directly with ABRAXAS1, BRCC3/BRCC36 and BABAM1/NBA1. Binds polyubiquitin. Component of the BRISC complex, at least composed of ABRAXAS2, BRCC3/BRCC36, BABAM2 and BABAM1/NBA1. Identified in a complex with SHMT2 and the other subunits of the BRISC complex. Component of the BRCA1/BRCA2 containing complex (BRCC), which also contains BRCA1, BRCA2, BARD1, BRCC3/BRCC36 and RAD51. BRCC is a ubiquitin E3 ligase complex that enhances cellular survival following DNA damage. May interact with FAS and TNFRSF1A.

The protein resides in the cytoplasm. It localises to the nucleus. Component of the BRCA1-A complex, a complex that specifically recognizes 'Lys-63'-linked ubiquitinated histones H2A and H2AX at DNA lesions sites, leading to target the BRCA1-BARD1 heterodimer to sites of DNA damage at double-strand breaks (DSBs). The BRCA1-A complex also possesses deubiquitinase activity that specifically removes 'Lys-63'-linked ubiquitin on histones H2A and H2AX. In the BRCA1-A complex, it acts as an adapter that bridges the interaction between BABAM1/NBA1 and the rest of the complex, thereby being required for the complex integrity and modulating the E3 ubiquitin ligase activity of the BRCA1-BARD1 heterodimer. Component of the BRISC complex, a multiprotein complex that specifically cleaves 'Lys-63'-linked ubiquitin in various substrates. Within the BRISC complex, acts as an adapter that bridges the interaction between BABAM1/NBA1 and the rest of the complex, thereby being required for the complex integrity. The BRISC complex is required for normal mitotic spindle assembly and microtubule attachment to kinetochores via its role in deubiquitinating NUMA1. The BRISC complex plays a role in interferon signaling via its role in the deubiquitination of the interferon receptor IFNAR1; deubiquitination increases IFNAR1 activity by enhancing its stability and cell surface expression. Down-regulates the response to bacterial lipopolysaccharide (LPS) via its role in IFNAR1 deubiquitination. May play a role in homeostasis or cellular differentiation in cells of neural, epithelial and germline origins. May also act as a death receptor-associated anti-apoptotic protein, which inhibits the mitochondrial apoptotic pathway. May regulate TNF-alpha signaling through its interactions with TNFRSF1A; however these effects may be indirect. The chain is BRISC and BRCA1-A complex member 2 from Rattus norvegicus (Rat).